Here is a 144-residue protein sequence, read N- to C-terminus: Transcription antitermination protein NusB (144 aa).

The protein belongs to the NusB family.

Involved in transcription antitermination. Required for transcription of ribosomal RNA (rRNA) genes. Binds specifically to the boxA antiterminator sequence of the ribosomal RNA (rrn) operons. This is Transcription antitermination protein NusB from Histophilus somni (strain 2336) (Haemophilus somnus).